A 613-amino-acid chain; its full sequence is Apoptosis-inducing factor 1, mitochondrial (613 aa).

2 short sequence motifs (mitochondrial localization signal) span residues 1 to 31 and 63 to 89; these read MFRC…PRQR and KIDN…KTMK. The N-terminal 54 residues, 1-54, are a transit peptide targeting the mitochondrion; sequence MFRCGGLAAGALKQKLVPLVRTVCVRSPRQRNRLPGNLFQRWHVPLELQMTRQM. Positions 55–101 are cleaved as a propeptide — removed in mature form; it reads ASSGASGGKIDNSVLVLIVGLSTVGAGAYAYKTMKEDEKRYNERISG. Positions 100-127 are disordered; the sequence is SGLGLTPEQKQKKAALSASEGEEVPQDK. Threonine 105 is modified (phosphothreonine). N6-succinyllysine is present on lysine 109. A phosphoserine mark is found at serine 116 and serine 118. The FAD-dependent oxidoreductase stretch occupies residues 134-483; the sequence is FLLIGGGTAA…KPYWHQSMFW (350 aa). Residues 138-142, 164-165, arginine 172, and lysine 177 each bind FAD; these read GGGTA and ED. Tryptophan 196 contacts NAD(+). Position 233 (valine 233) interacts with FAD. A Glycyl lysine isopeptide (Lys-Gly) (interchain with G-Cter in ubiquitin) cross-link involves residue lysine 255. Phosphoserine is present on serine 268. Arginine 285 is an FAD binding site. Serine 292 is subject to Phosphoserine. NAD(+) contacts are provided by residues 308–311, glutamate 336, and lysine 342; that span reads GGFL. Position 371 is a phosphoserine (serine 371). Position 388 is an N6-acetyllysine (lysine 388). Glycine 399 provides a ligand contact to NAD(+). Position 438 (aspartate 438) interacts with FAD. Positions 446-451 match the Nuclear localization signal motif; that stretch reads KLGRRR. Residues 453-454, tryptophan 483, and glutamate 493 contribute to the NAD(+) site; that span reads EH. Residues 454 to 455 and tryptophan 483 each bind FAD; that span reads HH. The segment covering 513–529 has biased composition (polar residues); it reads AQDNPKSATEQSGTGIR. Residues 513–554 form a disordered region; sequence AQDNPKSATEQSGTGIRSESETESEASEITIPPSTPAVPQAP. Threonine 521 carries the phosphothreonine modification. Residues serine 524 and serine 530 each carry the phosphoserine modification. Asparagine 583 lines the NAD(+) pocket. Lysine 593 is modified (N6-acetyllysine).

This sequence belongs to the FAD-dependent oxidoreductase family. As to quaternary structure, monomer (oxidized form). Homodimer (reduced form). Upon reduction with NADH, undergoes dimerization and forms tight, long-lived FADH2-NAD charge transfer complexes (CTC) resistant to oxidation. Also dimerizes with isoform 3 preventing its release from mitochondria. Interacts with XIAP/BIRC4. Interacts (via N-terminus) with EIF3G (via C-terminus). Interacts with PRELID1. Interacts with CHCHD4; the interaction increases in presence of NADH. Interacts with processed form of PARP1 (Poly [ADP-ribose] polymerase 1, processed C-terminus); interaction is mediated with poly-ADP-ribose chains attached to PARP1, promoting translocation into the nucleus. The cofactor is FAD. Post-translationally, under normal conditions, a 54-residue N-terminal segment is first proteolytically removed during or just after translocation into the mitochondrial intermembrane space (IMS) by the mitochondrial processing peptidase (MPP) to form the inner-membrane-anchored mature form (AIFmit). During apoptosis, it is further proteolytically processed at amino-acid position 101 leading to the generation of the mature form, which is confined to the mitochondrial IMS in a soluble form (AIFsol). AIFsol is released to the cytoplasm in response to specific death signals, and translocated to the nucleus, where it induces nuclear apoptosis in a caspase-independent manner. In terms of processing, ubiquitination by XIAP/BIRC4 does not lead to proteasomal degradation. Ubiquitination at Lys-255 by XIAP/BIRC4 blocks its ability to bind DNA and induce chromatin degradation, thereby inhibiting its ability to induce cell death. In terms of tissue distribution, expressed in all tested tissues. Detected in muscle and skin fibroblasts (at protein level). Expressed in osteoblasts (at protein level). Brain specific. As to expression, expressed in all tested tissues except brain. In terms of tissue distribution, isoform 5 is frequently down-regulated in human cancers.

It is found in the mitochondrion intermembrane space. It localises to the mitochondrion inner membrane. The protein localises to the cytoplasm. The protein resides in the nucleus. Its subcellular location is the perinuclear region. It is found in the mitochondrion. It localises to the cytosol. It carries out the reaction A + NADH + H(+) = AH2 + NAD(+). Functions both as NADH oxidoreductase and as regulator of apoptosis. In response to apoptotic stimuli, it is released from the mitochondrion intermembrane space into the cytosol and to the nucleus, where it functions as a proapoptotic factor in a caspase-independent pathway. Release into the cytoplasm is mediated upon binding to poly-ADP-ribose chains. The soluble form (AIFsol) found in the nucleus induces 'parthanatos' i.e. caspase-independent fragmentation of chromosomal DNA. Binds to DNA in a sequence-independent manner. Interacts with EIF3G, and thereby inhibits the EIF3 machinery and protein synthesis, and activates caspase-7 to amplify apoptosis. Plays a critical role in caspase-independent, pyknotic cell death in hydrogen peroxide-exposed cells. In contrast, participates in normal mitochondrial metabolism. Plays an important role in the regulation of respiratory chain biogenesis by interacting with CHCHD4 and controlling CHCHD4 mitochondrial import. Functionally, has NADH oxidoreductase activity. Does not induce nuclear apoptosis. In terms of biological role, pro-apoptotic isoform. In Homo sapiens (Human), this protein is Apoptosis-inducing factor 1, mitochondrial.